The following is a 556-amino-acid chain: Serine beta-lactamase-like protein LACTB, mitochondrial (556 aa).

The N-terminal 117 residues, 1-117 (MYRLLSAVMA…RAIDSSRDLL (117 aa)), are a transit peptide targeting the mitochondrion. The active-site Acyl-ester intermediate is the Ser-166. The segment covering 249 to 282 (ESDQEKELKEKGGKSNEKNDFAKAKVEQDNETKG) has biased composition (basic and acidic residues). The disordered stretch occupies residues 249–290 (ESDQEKELKEKGGKSNEKNDFAKAKVEQDNETKGRNSKPCKK). An N6-succinyllysine mark is found at Lys-290 and Lys-291. N6-acetyllysine is present on residues Lys-304 and Lys-349.

Belongs to the peptidase S12 family.

It localises to the mitochondrion. Functionally, mitochondrial serine protease that acts as a regulator of mitochondrial lipid metabolism. Acts by decreasing protein levels of PISD, a mitochondrial enzyme that converts phosphatidylserine (PtdSer) to phosphatidylethanolamine (PtdEtn), thereby affecting mitochondrial lipid metabolism. It is unclear whether it acts directly by mediating proteolysis of PISD or by mediating proteolysis of another lipid metabolism protein. This Bos taurus (Bovine) protein is Serine beta-lactamase-like protein LACTB, mitochondrial.